Reading from the N-terminus, the 249-residue chain is uncharacterized protein (249 aa).

Residues Pro-7–Phe-64 form the S4 RNA-binding domain. Asp-112 (nucleophile) is an active-site residue.

It belongs to the pseudouridine synthase RsuA family.

It catalyses the reaction a uridine in RNA = a pseudouridine in RNA. This is an uncharacterized protein from Borreliella burgdorferi (strain ATCC 35210 / DSM 4680 / CIP 102532 / B31) (Borrelia burgdorferi).